The primary structure comprises 76 residues: ATP synthase subunit 9, mitochondrial (76 aa).

M1 is modified (N-formylmethionine). The next 2 helical transmembrane spans lie at 14-34 (LASI…AALI) and 52-72 (ILGF…AFLL).

In terms of assembly, F-type ATP synthases have 2 components, the catalytic core F(1) and the membrane-embedded component F(0), linked together by a central stalk and a peripheral stalk. The central stalk, also called rotor shaft, is often seen as part of F(1). The peripheral stalk is seen as part of F(0). F(0) contains the membrane channel next to the rotor. F-type ATP synthases form dimers but each monomer functions independently in ATP generation. The dimer consists of 17 different polypeptides: ATP1 (subunit alpha, 3 molecules per monomer, part of F(1)), ATP2 (subunit beta, 3 copies per monomer, part of F(1)), ATP3 (subunit gamma, part of the central stalk), ATP4 (subunit b, part of the peripheral stalk), ATP5/OSCP (subunit 5/OSCP, part of the peripheral stalk), ATP6 (subunit a, part of the peripheral stalk), ATP7 (subunit d, part of the peripheral stalk), ATP8 (subunit 8, part of the peripheral stalk), OLI1 (subunit c, part of the rotor, 10 molecules per monomer), ATP14 (subunit h, part of the peripheral stalk), ATP15 (subunit epsilon, part of the central stalk), ATP16 (subunit delta, part of the central stalk), ATP17 (subunit f, part of the peripheral stalk), ATP18 (subunit i/j, part of the peripheral stalk), ATP19 (subunit k, dimer-specific, at interface between monomers), ATP20 (subunit g, at interface between monomers), TIM11 (subunit e, at interface between monomers).

It localises to the mitochondrion inner membrane. Functionally, mitochondrial membrane ATP synthase (F(1)F(0) ATP synthase or Complex V) produces ATP from ADP in the presence of a proton gradient across the membrane which is generated by electron transport complexes of the respiratory chain. F-type ATP synthases consist of two structural domains, F(1) - containing the extramembraneous catalytic core, and F(0) - containing the membrane proton channel, linked together by a central stalk and a peripheral stalk. During catalysis, ATP synthesis in the catalytic domain of F(1) is coupled via a rotary mechanism of the central stalk subunits to proton translocation. Part of the complex F(0) domain. A homomeric c-ring of 10 OLI1/ATP9 subunits is part of the complex rotary element. This is ATP synthase subunit 9, mitochondrial from Yarrowia lipolytica (strain CLIB 122 / E 150) (Yeast).